Reading from the N-terminus, the 517-residue chain is Gallate 1-beta-glucosyltransferase 84A24 (517 aa).

Residue His-19 is the Proton acceptor of the active site. His-19 is an an anthocyanidin binding site. The UDP-alpha-D-glucose site is built by Gln-344, His-359, Trp-362, Asn-363, Ser-364, and Glu-367. Gly-382 lines the an anthocyanidin pocket. 2 residues coordinate UDP-alpha-D-glucose: Asp-383 and Gln-384.

It belongs to the UDP-glycosyltransferase family. Highly expressed in leaf. Also expressed in peel, stem, root and aril.

It localises to the cytoplasm. The enzyme catalyses 3,4,5-trihydroxybenzoate + UDP-alpha-D-glucose = 1-O-galloyl-beta-D-glucose + UDP. It carries out the reaction 3,4-dihydroxybenzoate + UDP-alpha-D-glucose = 1-O-(3,4-dihydroxy-benzoyl)-beta-D-glucose + UDP. It catalyses the reaction 4-hydroxybenzoate + UDP-alpha-D-glucose = 4-(beta-D-glucosyloxy)benzoate + UDP + H(+). The catalysed reaction is (E)-cinnamate + UDP-alpha-D-glucose = 1-O-(trans-cinnamoyl)-beta-D-glucose + UDP. The enzyme catalyses (E)-sinapate + UDP-alpha-D-glucose = 1-O-(trans-sinapoyl)-beta-D-glucose + UDP. It carries out the reaction (E)-4-coumarate + UDP-alpha-D-glucose = 1-O-(trans-4-coumaroyl)-beta-D-glucose + UDP. It catalyses the reaction (E)-caffeate + UDP-alpha-D-glucose = 1-O-[(E)-caffeoyl]-beta-D-glucose + UDP. The catalysed reaction is (E)-ferulate + UDP-alpha-D-glucose = 1-O-[(E)-feruloyl]-beta-D-glucose + UDP. The enzyme catalyses genistein + UDP-alpha-D-glucose = genistein 7-O-beta-D-glucoside + UDP + H(+). It carries out the reaction apigenin + UDP-alpha-D-glucose = apigenin 7-O-beta-D-glucoside + UDP + H(+). It catalyses the reaction luteolin + UDP-alpha-D-glucose = luteolin 7-O-beta-D-glucoside + UDP + H(+). Functionally, glucosyltransferase that catalyzes the formation of 1-O-beta-D-glucose esters with hydroxybenzoic acids and cinnamic acid including its derivatives as preferred glucosyl acceptors. Has significant activity with gallic acid (3,4,5-trihydroxybenzoic acid), 3,4-dihydroxybenzoic acid, 4-hydroxybenzoic acid, cinnamic acid, sinapic acid, coumaric acid, caffeic acid and ferulic acid in vitro. Gallic acid is the predicted native substrate of the enzyme, which thus catalyzes the formation of 1-O-galloyl-beta-D-glucose, the first committed step of hydrolyzable tannins (HTs) biosynthesis, with punicalagin isomers being the major HTs of pomegranate. Catalyzes the formation of flavonoid glucosides with genistein, apigenin and luteolin in vitro. Has low activity with benzoic acid, 2-hydroxybenzoic acid, 3-hydroxybenzoic acid, 2,4-dihydroxybenzoic acid, naringenin and quercetin. No activity with catechol, resveratrol, chlorogenic acid, catechin and epicatechin (building blocks of proanthocyanidins) or cyanidin, delphinidin and pelargonidin (the three anthocyanidins). The chain is Gallate 1-beta-glucosyltransferase 84A24 from Punica granatum (Pomegranate).